The following is a 459-amino-acid chain: uncharacterized protein (459 aa).

Residues 13-145 (TESAIKRVVG…DALSKGRELK (133 aa)) form the B12-binding domain. The Radical SAM core domain occupies 188 to 402 (ADGVPFGVVM…MNWRKYTTID (215 aa)). Cysteine 202, cysteine 206, and cysteine 209 together coordinate [4Fe-4S] cluster.

Belongs to the methyltransferase superfamily. The cofactor is [4Fe-4S] cluster.

This is an uncharacterized protein from Pyrococcus horikoshii (strain ATCC 700860 / DSM 12428 / JCM 9974 / NBRC 100139 / OT-3).